Consider the following 854-residue polypeptide: MTDTTLPPEGEAHDRIEPVDIQQEMQRSYIDYAMSVIVGRALPEVRDGLKPVHRRVLYAMYDSASSDRSHAKSARSVAETMGNYHPHGDASIYDTLVRMAQPWSLRYPLVDGQGNFGSPGNDPPAAMRYTEARLTPLAMEMLREIDEETVDFIPNYDGRVQEPTVLPSRFPNLLANGSRGIAVGMATNNPPHNLGELAEAVYWCLENYEADEEATCEAVMERVKGPDFPTSGLIVGTQGIEDTYKTGRGSIKMRGVVEIEEDSRGRTSIVITELPYQVNHDNFITSIAEQVRDGKLAGISNIEDQSSDRVGLRIVVELKRDAVAKVVLNNLYKHTQLQTSFGANMLSIVDGVPRTLRLDQLIRLYVDHQLDVIVRRTRYRLRKANERAHILRGLVKALDALDEVIALIRASQTVDIARAGLIELLDIDDIQAQAILDMQLRRLAALERQKIVDDLAKIEAEIADLEDILAKPERQRGIVRDELKEIVDKHGDARRTRIVPADGQVSDEDLIAREDVVVTITETGYAKRTKTDLYHSQKRGGKGVQGAGLKQDDMVNHFFVCSTHDWILFFTTQGRVYRAKAYELPEASRTARGQHVANLLAFQPEERIAQVIQIKSYEDAPYLVLATRNGLVKKSKLSDFDSNRSGGIVAINLREGDELVGAVLCSAEDDLLLVSANRQSIRFSATDEALRPMGRATSGVQGMRFNEDDRLLSLNVVRPDTYLLVATSGGYAKRTSIDEYSVQGRGGKGILTIQYDRKRGSLVGALIVDDDTELYAITSTGGVIRTAARQVRKAGRQTKGVRLMNLAEGDTLIAIARNGRGRGGRVDQRIRRGHRRVTRGVMETLRSRKVLGPS.

The 469-residue stretch at 42–510 (LPEVRDGLKP…ADGQVSDEDL (469 aa)) folds into the Topo IIA-type catalytic domain. Y129 acts as the O-(5'-phospho-DNA)-tyrosine intermediate in catalysis. The GyrA-box motif lies at 537–543 (QKRGGKG).

The protein belongs to the type II topoisomerase GyrA/ParC subunit family. As to quaternary structure, heterotetramer, composed of two GyrA and two GyrB chains. In the heterotetramer, GyrA contains the active site tyrosine that forms a transient covalent intermediate with DNA, while GyrB binds cofactors and catalyzes ATP hydrolysis.

Its subcellular location is the cytoplasm. The enzyme catalyses ATP-dependent breakage, passage and rejoining of double-stranded DNA.. DNA supercoiling is inhibited by the coumarin antibiotic novobiocin. Also inhibited by the fluoroquinolones ciprofloxacin and moxifloxacin. In terms of biological role, a type II topoisomerase that negatively supercoils closed circular double-stranded (ds) DNA in an ATP-dependent manner to modulate DNA topology and maintain chromosomes in an underwound state; also catalyzes the interconversion of other topological isomers of double-stranded DNA rings, including catenanes. At comparable concentrations has a stronger decatenation activity than E.coli, which is inhibited by ciprofloxacin and novobiocin. Cleaves dsDNA at the sequence 5'-AT/GGCC-3', leaving a 4 base overhang. Relaxes negatively supercoiled DNA in an ATP-independent manner. Functionally, negative supercoiling favors strand separation, and DNA replication, transcription, recombination and repair, all of which involve strand separation. Type II topoisomerases break and join 2 DNA strands simultaneously in an ATP-dependent manner. The sequence is that of DNA gyrase subunit A from Mycolicibacterium smegmatis (Mycobacterium smegmatis).